We begin with the raw amino-acid sequence, 425 residues long: CinA-like protein (425 aa).

This sequence belongs to the CinA family.

The chain is CinA-like protein from Desulfovibrio desulfuricans (strain ATCC 27774 / DSM 6949 / MB).